Consider the following 273-residue polypeptide: Homeobox protein Nkx-2.2 (273 aa).

Disordered stretches follow at residues 1-56 (MSLT…LDAV) and 90-131 (LAAG…KRKR). Residues 20 to 38 (DTNDEEGSVAEGPEEENEG) show a composition bias toward acidic residues. Positions 128-187 (KRKRRVLFSKAQTYELERRFRQQRYLSAPEREHLASLIRLTPTQVKIWFQNHRYKMKRAR) form a DNA-binding region, homeobox.

This sequence belongs to the NK-2 homeobox family. Interacts with OLIG2.

It localises to the nucleus. In terms of biological role, transcriptional activator involved in the development of insulin-producting beta cells in the endocrine pancreas. May also be involved in specifying diencephalic neuromeric boundaries, and in controlling the expression of genes that play a role in axonal guidance. Binds to elements within the NEUROD1 promoter. The sequence is that of Homeobox protein Nkx-2.2 (NKX2-2) from Homo sapiens (Human).